The sequence spans 843 residues: Glycogen phosphorylase, brain form (843 aa).

Ala2 is subject to N-acetylalanine. Position 15 is a phosphoserine; by PHK; in form phosphorylase A (Ser15). Residues Asp43, Tyr197, and Arg310 each coordinate AMP. Tyr197 carries the phosphotyrosine modification. Tyr473 carries the phosphotyrosine modification. Residue Ser524 is modified to Phosphoserine. A pyridoxal 5'-phosphate-binding site is contributed by Lys569. Positions 677–678 (TG) are pyridoxal 5'-phosphate. N6-(pyridoxal phosphate)lysine is present on Lys681.

This sequence belongs to the glycogen phosphorylase family. In terms of assembly, homodimer. Dimers associate into a tetramer to form the enzymatically active phosphorylase A. It depends on pyridoxal 5'-phosphate as a cofactor. Post-translationally, phosphorylation of Ser-15 converts phosphorylase B (unphosphorylated) to phosphorylase A.

The enzyme catalyses [(1-&gt;4)-alpha-D-glucosyl](n) + phosphate = [(1-&gt;4)-alpha-D-glucosyl](n-1) + alpha-D-glucose 1-phosphate. Its activity is regulated as follows. Activity of phosphorylase is controlled both by allosteric means (through the non-covalent binding of metabolites) and by covalent modification. Thus AMP allosterically activates, whereas ATP, ADP, and glucose-6-phosphate allosterically inhibit, phosphorylase B. In terms of biological role, glycogen phosphorylase that regulates glycogen mobilization. Phosphorylase is an important allosteric enzyme in carbohydrate metabolism. Enzymes from different sources differ in their regulatory mechanisms and in their natural substrates. However, all known phosphorylases share catalytic and structural properties. This Mus musculus (Mouse) protein is Glycogen phosphorylase, brain form (Pygb).